Reading from the N-terminus, the 313-residue chain is Thymidylate synthase (313 aa).

Residues 1 to 28 form a disordered region; it reads MPVAGSELPRRPLPPAAQERDAEPRPPH. Basic and acidic residues predominate over residues 18 to 28; sequence QERDAEPRPPH. Arginine 50 lines the dUMP pocket. Position 114 is a phosphoserine (serine 114). Residues 175-176, 195-196, 215-218, asparagine 226, and 256-258 each bind dUMP; these read RR, CH, RSGD, and HIY. Cysteine 195 serves as the catalytic Nucleophile. Aspartate 218 provides a ligand contact to (6R)-5,10-methylene-5,6,7,8-tetrahydrofolate. Glycyl lysine isopeptide (Lys-Gly) (interchain with G-Cter in SUMO2) cross-links involve residues lysine 287, lysine 292, and lysine 308. Alanine 312 is a binding site for (6R)-5,10-methylene-5,6,7,8-tetrahydrofolate.

This sequence belongs to the thymidylate synthase family. In terms of assembly, homodimer.

It localises to the nucleus. It is found in the cytoplasm. Its subcellular location is the mitochondrion. The protein localises to the mitochondrion matrix. The protein resides in the mitochondrion inner membrane. It carries out the reaction dUMP + (6R)-5,10-methylene-5,6,7,8-tetrahydrofolate = 7,8-dihydrofolate + dTMP. It functions in the pathway pyrimidine metabolism; dTTP biosynthesis. Functionally, catalyzes the reductive methylation of 2'-deoxyuridine 5'-monophosphate (dUMP) to thymidine 5'-monophosphate (dTMP), using the cosubstrate, 5,10- methylenetetrahydrofolate (CH2H4folate) as a 1-carbon donor and reductant and contributes to the de novo mitochondrial thymidylate biosynthesis pathway. The polypeptide is Thymidylate synthase (Homo sapiens (Human)).